The primary structure comprises 361 residues: AT-hook motif nuclear-localized protein 12 (361 aa).

2 disordered regions span residues 29 to 143 (SQVA…GRKQ) and 286 to 361 (NNKT…LTRG). The span at 48-59 (SNPNIHHPQANN) shows a compositional bias: polar residues. Positions 85–95 (QPPPPPPPPEE) are enriched in pro residues. A Bipartite nuclear localization signal motif is present at residues 99-107 (KRKRGRPRK). 2 consecutive DNA-binding regions (a.T hook) follow at residues 99 to 111 (KRKR…YGEP) and 130 to 142 (KRAR…TGRK). One can recognise a PPC domain in the interval 154 to 297 (TSAGLAFAPH…KTIRQEKEPN (144 aa)). Residues 306–322 (ETTPGSAAEPAASAGQQ) show a composition bias toward low complexity.

As to quaternary structure, homodimer. Interacts with AHL27, AHL29 and ATAF2/NAC081.

Its subcellular location is the nucleus. Transcription factor that specifically binds AT-rich DNA sequences related to the nuclear matrix attachment regions (MARs). The sequence is that of AT-hook motif nuclear-localized protein 12 from Arabidopsis thaliana (Mouse-ear cress).